A 514-amino-acid chain; its full sequence is Coiled-coil domain-containing protein 174 (514 aa).

Disordered stretches follow at residues 42-83 (AKPK…DQSR) and 137-162 (TLEK…PDEE). Basic and acidic residues predominate over residues 63–83 (KRAEKDIEQKAEEDQTLDQSR). A coiled-coil region spans residues 66–98 (EKDIEQKAEEDQTLDQSRKKLEEKAKLYEKMTK). Over residues 141-162 (ETDDEEIEPEMEIPPPEDPDEE) the composition is skewed to acidic residues. 2 coiled-coil regions span residues 203-227 (LLSE…ALRK) and 266-321 (LDML…LENG). 2 disordered regions span residues 270–291 (REQT…KAAL) and 306–490 (LREE…PSAH). Composition is skewed to basic and acidic residues over residues 335–354 (EVPR…RDTK) and 376–388 (KKQE…RDPE). Residues 405 to 418 (YSSQNLNSPETSPG) show a composition bias toward polar residues. Residues 420-429 (TEPEISENQK) show a composition bias toward basic and acidic residues.

Its subcellular location is the nucleus. Its function is as follows. Probably involved in neuronal development. The protein is Coiled-coil domain-containing protein 174 (CCDC174) of Gallus gallus (Chicken).